A 619-amino-acid polypeptide reads, in one-letter code: ESX-2 secretion system protein EccA2 (619 aa).

373–380 (GPPGTGKT) provides a ligand contact to ATP.

This sequence belongs to the CbxX/CfxQ family. Part of the ESX-2 / type VII secretion system (T7SS), which is composed of cytosolic and membrane components.

Its subcellular location is the cytoplasm. Functionally, part of an ESX-2 / type VII specialized secretion system (T7SS), which exports several proteins. May have ATPase activity and might provide energy for the export of ESX-2 substrates. The polypeptide is ESX-2 secretion system protein EccA2 (Mycobacterium bovis (strain ATCC BAA-935 / AF2122/97)).